The sequence spans 343 residues: Heat-inducible transcription repressor HrcA (343 aa).

The protein belongs to the HrcA family.

Functionally, negative regulator of class I heat shock genes (grpE-dnaK-dnaJ and groELS operons). Prevents heat-shock induction of these operons. In Bacillus licheniformis (strain ATCC 14580 / DSM 13 / JCM 2505 / CCUG 7422 / NBRC 12200 / NCIMB 9375 / NCTC 10341 / NRRL NRS-1264 / Gibson 46), this protein is Heat-inducible transcription repressor HrcA.